The primary structure comprises 486 residues: Cardiolipin synthase A (486 aa).

2 helical membrane passes run 3–23 and 38–58; these read TFYTVVNWLVILGYWLLIAGV and MAWLLIIYILPLVGIIAYLSF. PLD phosphodiesterase domains are found at residues 219–246 and 399–426; these read MDLRQHRKMVMIDNYIAYTGSMNMVDPR and EGGLLHTKSVLVDGELSLVGTVNLDMRS. Residues histidine 224, lysine 226, aspartate 231, histidine 404, lysine 406, and aspartate 411 contribute to the active site.

This sequence belongs to the phospholipase D family. Cardiolipin synthase subfamily. ClsA sub-subfamily.

The protein resides in the cell inner membrane. The enzyme catalyses 2 a 1,2-diacyl-sn-glycero-3-phospho-(1'-sn-glycerol) = a cardiolipin + glycerol. Functionally, catalyzes the reversible phosphatidyl group transfer from one phosphatidylglycerol molecule to another to form cardiolipin (CL) (diphosphatidylglycerol) and glycerol. This Klebsiella pneumoniae (strain 342) protein is Cardiolipin synthase A.